The following is a 255-amino-acid chain: Type III pantothenate kinase (255 aa).

ATP is bound at residue 6–13 (DIGNTNTV). Substrate-binding positions include tyrosine 100 and 107–110 (GADR). The Proton acceptor role is filled by aspartate 109. Residue aspartate 129 coordinates K(+). ATP is bound at residue threonine 132. Threonine 185 provides a ligand contact to substrate.

It belongs to the type III pantothenate kinase family. In terms of assembly, homodimer. It depends on NH4(+) as a cofactor. K(+) is required as a cofactor.

It is found in the cytoplasm. The catalysed reaction is (R)-pantothenate + ATP = (R)-4'-phosphopantothenate + ADP + H(+). The protein operates within cofactor biosynthesis; coenzyme A biosynthesis; CoA from (R)-pantothenate: step 1/5. Its function is as follows. Catalyzes the phosphorylation of pantothenate (Pan), the first step in CoA biosynthesis. This is Type III pantothenate kinase from Desulfosudis oleivorans (strain DSM 6200 / JCM 39069 / Hxd3) (Desulfococcus oleovorans).